The following is a 367-amino-acid chain: Probable glutamine synthetase (367 aa).

Residues 30–110 (IQATYVWIDG…VMCDTLDHQM (81 aa)) form the GS beta-grasp domain. In terms of domain architecture, GS catalytic spans 117 to 367 (HRQACAEIMH…TAMIAQSILF (251 aa)).

Belongs to the glutamine synthetase family. Homooctamer.

It localises to the cytoplasm. The catalysed reaction is L-glutamate + NH4(+) + ATP = L-glutamine + ADP + phosphate + H(+). In Caenorhabditis elegans, this protein is Probable glutamine synthetase (gln-2).